We begin with the raw amino-acid sequence, 272 residues long: Cell division protein FtsQ (272 aa).

Over 1–20 the chain is Cytoplasmic; it reads MSSYAPREIPLDIRLMQGTS. The helical transmembrane segment at 21–40 threads the bilayer; sequence RALFWLVALGCLFVAGHWLM. The Periplasmic segment spans residues 41-272; the sequence is QRNWWDIRAV…KTPQPAGRKD (232 aa). One can recognise a POTRA domain in the interval 45–114; the sequence is WDIRAVRLQG…MQLAVTLQAQ (70 aa).

The protein belongs to the FtsQ/DivIB family. FtsQ subfamily. As to quaternary structure, part of a complex composed of FtsB, FtsL and FtsQ.

It is found in the cell inner membrane. Essential cell division protein. May link together the upstream cell division proteins, which are predominantly cytoplasmic, with the downstream cell division proteins, which are predominantly periplasmic. May control correct divisome assembly. This is Cell division protein FtsQ from Thiomonas arsenitoxydans (strain DSM 22701 / CIP 110005 / 3As).